Here is a 257-residue protein sequence, read N- to C-terminus: NAD-capped RNA hydrolase NudC (257 aa).

Residue Arg-69 coordinates substrate. 2 residues coordinate Zn(2+): Cys-98 and Cys-101. Substrate is bound at residue Glu-111. Zn(2+) is bound by residues Cys-116 and Cys-119. Tyr-124 lines the substrate pocket. Positions 125–248 (PQIAPCIIVA…TVARRLIEDT (124 aa)) constitute a Nudix hydrolase domain. 3 residues coordinate a divalent metal cation: Ala-158, Glu-174, and Glu-178. The short motif at 159–180 (GFVEVGETLEQAVAREVMEESG) is the Nudix box element. Substrate is bound at residue 192–199 (QPWPFPQS). Glu-219 serves as a coordination point for a divalent metal cation. Residue Ala-241 coordinates substrate.

This sequence belongs to the Nudix hydrolase family. NudC subfamily. In terms of assembly, homodimer. The cofactor is Mg(2+). It depends on Mn(2+) as a cofactor. Requires Zn(2+) as cofactor.

The enzyme catalyses a 5'-end NAD(+)-phospho-ribonucleoside in mRNA + H2O = a 5'-end phospho-adenosine-phospho-ribonucleoside in mRNA + beta-nicotinamide D-ribonucleotide + 2 H(+). It catalyses the reaction NAD(+) + H2O = beta-nicotinamide D-ribonucleotide + AMP + 2 H(+). The catalysed reaction is NADH + H2O = reduced beta-nicotinamide D-ribonucleotide + AMP + 2 H(+). In terms of biological role, mRNA decapping enzyme that specifically removes the nicotinamide adenine dinucleotide (NAD) cap from a subset of mRNAs by hydrolyzing the diphosphate linkage to produce nicotinamide mononucleotide (NMN) and 5' monophosphate mRNA. The NAD-cap is present at the 5'-end of some mRNAs and stabilizes RNA against 5'-processing. Has preference for mRNAs with a 5'-end purine. Catalyzes the hydrolysis of a broad range of dinucleotide pyrophosphates. The sequence is that of NAD-capped RNA hydrolase NudC from Salmonella schwarzengrund (strain CVM19633).